Reading from the N-terminus, the 860-residue chain is MTTTSLGADAAHTHAMVPSAIPPEGSDAAGPDDTLMQQMQAACAQACRAIAPAWPLDRAIAVNPHWGRVDMPVRRVAARMAVLGGIQVFPTRRSQQQAWVAGRITPADLADALAQLPAARAAGLTEAKCVEALRRHELPPRLPLLIDVLDNDPQRHTRLSWRQAITHQVSQTCAAYFDVHQADWQPERADGLYGFWRDTLQHDHGIGLLMGLPDLGRRLDALPATPLDAEHWALNQLGLPQPVWADYLEAVLLTVNGWASWCAYLGWQAAQEGREDPHLRDLLAIRLAWGAIVQECRDDASTRMAFAALQAEWQQAPSALAEAEAALLVDEVWQLALEAGYQRQLAHRLAGAGALPPVPQDIEVQAAFCIDVRSEPLRRALECVWPAVQTIGFAGFFGLPVAYTPLGTAARRPQLPGLLAPTMEVSDRIDAAQGPDGMPDPAAERAAERARRHRLGASAQVDGASRWPSAAFSYVEVAGVGYLGKLWRWLRPSTEARSRADLTGLPSRYRAVCRPHLHAESVETKAALAARVLRAMGLAEHLAPLVLFVGHGSQTSNNAHAAALDCGACCGQTGEVNARSLALLLNEPPVRAALQAHGITVPEDTVFAAALHNTTTDEIEGFDLDRLPPAARARWDHLQSVLKHASDQVRRERAPSLGLDPRAPHDDLLTQLRRRANDGAQTRPEWGLAGNAAFVIAPRHRTQGVVLDGRSFLHDYDASRDHDGSVLELLMTAPMLVTHWINWQYHASMCDPVHLGSGNKLLHNVVGGSIGVFEGNGGDLRIGLSRQSLHDGQRWIHEPLRLTVLIDAPETAIERVVDKHPIVRQLVDNGWLHLWRFGPQDLQRYAAGQWRPLTSRHATC.

Positions 1 to 32 (MTTTSLGADAAHTHAMVPSAIPPEGSDAAGPD) are disordered. Residues C369, D371, H551, and C566 each contribute to the Zn(2+) site.

This sequence belongs to the inorganic carbon transporter (TC 9.A.2) DabA family. As to quaternary structure, forms a complex with DabB. The cofactor is Zn(2+).

The protein localises to the cell inner membrane. Its function is as follows. Part of an energy-coupled inorganic carbon pump. The polypeptide is Probable inorganic carbon transporter subunit DabA (Ralstonia pickettii (strain 12D)).